Here is a 216-residue protein sequence, read N- to C-terminus: Transmembrane emp24 domain-containing protein eca (216 aa).

The signal sequence occupies residues 1 to 20 (MRDQFICLALLLCALHSACG). The Lumenal portion of the chain corresponds to 21-182 (LYFHISETER…FRHTSESTNS (162 aa)). Residues 30 to 126 (RKCFIEEVPD…QLRVHLDIQV (97 aa)) enclose the GOLD domain. A coiled-coil region spans residues 134 to 164 (ANVAQKEKLTELQLRIRQLLDQVEQITKEQN). A helical membrane pass occupies residues 183-203 (RVLWWSLAQTLVLVCMGFWQM). Over 204-216 (RHLKSFFEAKKLV) the chain is Cytoplasmic. The Prevents secretion from ER motif lies at 213–216 (KKLV).

It belongs to the EMP24/GP25L family.

It is found in the endoplasmic reticulum membrane. In terms of biological role, eca and bai are essential, though not redundant, for dorsoventral patterning of the embryo. Specifically required during early embryogenesis for the activity of maternal tkv, while the zygotic tkv is not affected. Involved in Golgi organization. The protein is Transmembrane emp24 domain-containing protein eca of Drosophila pseudoobscura pseudoobscura (Fruit fly).